Consider the following 745-residue polypeptide: Polyribonucleotide nucleotidyltransferase (745 aa).

D487 and D493 together coordinate Mg(2+). Residues 554 to 613 enclose the KH domain; the sequence is PSTTTIKIDKDKIRDIIGPGGKVIKEICEISGAKIDISDDGTVSIYASDRDKLKVALDKI. The S1 motif domain occupies 623–691; the sequence is GEIFNGTVMK…NKGKAKLTIK (69 aa). The interval 691–745 is disordered; the sequence is KNADKDKSSNNTKPKTNAKDNSEPEQRRDSSKKRAWNEDNNAETAEVITERKYFN. A compositionally biased stretch (basic and acidic residues) spans 707–719; the sequence is NAKDNSEPEQRRD.

This sequence belongs to the polyribonucleotide nucleotidyltransferase family. The cofactor is Mg(2+).

The protein localises to the cytoplasm. It catalyses the reaction RNA(n+1) + phosphate = RNA(n) + a ribonucleoside 5'-diphosphate. Its function is as follows. Involved in mRNA degradation. Catalyzes the phosphorolysis of single-stranded polyribonucleotides processively in the 3'- to 5'-direction. This chain is Polyribonucleotide nucleotidyltransferase, found in Rickettsia massiliae (strain Mtu5).